Here is a 321-residue protein sequence, read N- to C-terminus: Putative zinc finger CCCH domain-containing protein 9 (321 aa).

Disordered regions lie at residues 1 to 59 (MADA…PGKK) and 181 to 269 (REAE…NLQE). Basic and acidic residues predominate over residues 10–29 (EAERRSDETESRSIKEPKEK). Residues 55-83 (RPGKKDCQFYLKNGLCRYRSSCRFNHPTQ) form a C3H1-type zinc finger. A coiled-coil region spans residues 164-290 (TEWRFERERM…EARLRLEQIR (127 aa)). Basic and acidic residues-rich tracts occupy residues 181–224 (REAE…REAQ) and 231–244 (RQRD…REAQ).

This chain is Putative zinc finger CCCH domain-containing protein 9, found in Arabidopsis thaliana (Mouse-ear cress).